An 890-amino-acid polypeptide reads, in one-letter code: Leucine-rich repeat receptor-like tyrosine-protein kinase PXC3 (890 aa).

The first 23 residues, 1–23 (MTFWCMSILLIVGFLSKSELCEA), serve as a signal peptide directing secretion. At 24 to 534 (QLSDEATLVA…LRYNHRVSYR (511 aa)) the chain is on the extracellular side. Residues Asn46, Asn61, Asn78, and Asn108 are each glycosylated (N-linked (GlcNAc...) asparagine). LRR repeat units lie at residues 67–85 (MLDL…ISDL), 86–108 (RSLK…SFGN), 110–132 (SELE…EFGK), 133–157 (LRGL…LKVL), 159–181 (RLEE…VGNL), 182–205 (SSLR…LGLV), 206–229 (SELE…IFEK), 231–254 (KLKV…GICS), 256–276 (LSSI…TIGN), 278–300 (SGLT…EFSK), 301–325 (CSNL…LGQL), 326–349 (INLQ…FLGS), 350–373 (GNLN…LCSM), 375–397 (RLQY…IGNC), 399–421 (KLLQ…IGRM), 422–446 (RNLQ…LGKL), 447–469 (DKLV…LLKG), and 471–492 (MSLI…VFVP). N-linked (GlcNAc...) asparagine glycosylation is found at Asn140, Asn171, and Asn180. Asn276, Asn289, and Asn303 each carry an N-linked (GlcNAc...) asparagine glycan. A glycan (N-linked (GlcNAc...) asparagine) is linked at Asn363. Residue Asn429 is glycosylated (N-linked (GlcNAc...) asparagine). N-linked (GlcNAc...) asparagine glycosylation is found at Asn477 and Asn498. A helical membrane pass occupies residues 535–555 (IVLAVIGSGVAVFVSVTVVVL). Topologically, residues 556–890 (LFMMREKQEK…EMLQEVKQIK (335 aa)) are cytoplasmic. Positions 608 to 886 (MKESNKLSTG…KKVVEMLQEV (279 aa)) constitute a Protein kinase domain. Residues 614-622 (LSTGTFSSV) and Lys636 each bind ATP. Asp735 serves as the catalytic Proton acceptor.

It belongs to the protein kinase superfamily. Tyr protein kinase family. Expressed in the vascular strands of cotyledons, the shoot apex, hypocotyls, roots, leaves, stems and flowers.

The protein resides in the cell membrane. The catalysed reaction is L-tyrosyl-[protein] + ATP = O-phospho-L-tyrosyl-[protein] + ADP + H(+). Its function is as follows. Leucine-rich repeat receptor-like protein kinase that may play a role in vascular tissues development. This Arabidopsis thaliana (Mouse-ear cress) protein is Leucine-rich repeat receptor-like tyrosine-protein kinase PXC3.